Here is a 310-residue protein sequence, read N- to C-terminus: Ribonuclease HIII (310 aa).

Residues 90-306 (FQCIGSDEAG…RKKAENLVQK (217 aa)) form the RNase H type-2 domain. D96, E97, and D201 together coordinate a divalent metal cation.

Belongs to the RNase HII family. RnhC subfamily. Mn(2+) serves as cofactor. Mg(2+) is required as a cofactor.

It localises to the cytoplasm. The catalysed reaction is Endonucleolytic cleavage to 5'-phosphomonoester.. Functionally, endonuclease that specifically degrades the RNA of RNA-DNA hybrids. This is Ribonuclease HIII from Staphylococcus saprophyticus subsp. saprophyticus (strain ATCC 15305 / DSM 20229 / NCIMB 8711 / NCTC 7292 / S-41).